Consider the following 828-residue polypeptide: Periplasmic nitrate reductase (828 aa).

Residues 1-31 (MKLSRRSFMKANAVAAAAAAAGLSVPGVARA) constitute a signal peptide (tat-type signal). One can recognise a 4Fe-4S Mo/W bis-MGD-type domain in the interval 39-95 (IKWDKAPCRFCGTGCGVLVGTQQGRVVACQGDPDAPVNRGLNCIKGYFLPKIMYGKD). Residues C46, C49, C53, and C81 each coordinate [4Fe-4S] cluster. Residues K83, Q150, N175, C179, 212 to 219 (WGANMAEM), 243 to 247 (STYQH), 262 to 264 (QSD), M372, Q376, N482, 508 to 509 (SD), K531, D558, and 718 to 727 (TGRVLEHWHT) each bind Mo-bis(molybdopterin guanine dinucleotide). F794 contributes to the substrate binding site. Mo-bis(molybdopterin guanine dinucleotide) is bound by residues N802 and K819.

Belongs to the prokaryotic molybdopterin-containing oxidoreductase family. NasA/NapA/NarB subfamily. Component of the periplasmic nitrate reductase NapAB complex composed of NapA and NapB. [4Fe-4S] cluster serves as cofactor. The cofactor is Mo-bis(molybdopterin guanine dinucleotide). In terms of processing, predicted to be exported by the Tat system. The position of the signal peptide cleavage has not been experimentally proven.

It localises to the periplasm. The enzyme catalyses 2 Fe(II)-[cytochrome] + nitrate + 2 H(+) = 2 Fe(III)-[cytochrome] + nitrite + H2O. Catalytic subunit of the periplasmic nitrate reductase complex NapAB. Receives electrons from NapB and catalyzes the reduction of nitrate to nitrite. This Shigella flexneri protein is Periplasmic nitrate reductase.